The chain runs to 309 residues: Olfactory receptor 1A1 (309 aa).

Topologically, residues 1-25 (MRENNQSSTLEFILLGVTGQQEQED) are extracellular. Residue Asn5 is glycosylated (N-linked (GlcNAc...) asparagine). Residues 26 to 49 (FFYILFLFIYPITLIGNLLIVLAI) traverse the membrane as a helical segment. Residues 50–57 (CSDVHLHN) lie on the Cytoplasmic side of the membrane. A helical transmembrane segment spans residues 58–79 (PMYFLLANLSLVDIFFSSVTIP). The Extracellular portion of the chain corresponds to 80 to 100 (KMLANHLSGSKSISFGGCLTQ). Cys97 and Cys189 are oxidised to a cystine. A helical transmembrane segment spans residues 101–120 (MYFMIDLGNTDSYTLAAMAY). At 121 to 139 (DRAVAISRPLHYTTIMSPR) the chain is on the cytoplasmic side. Residues 140–158 (SCIWLIAGSWVIGNANALP) form a helical membrane-spanning segment. Topologically, residues 159 to 195 (HTLLTASLSFCGNQEVANFYCDITPLLKLSCSDIHFH) are extracellular. Residues 196 to 218 (VKMMYLGVGIFSVPLLCIIVSYI) form a helical membrane-spanning segment. Topologically, residues 219-235 (RVFSTVFQVPSTKGVLK) are cytoplasmic. A helical transmembrane segment spans residues 236–258 (AFSTCGSHLTVVSLYYGTVMGMY). At 259-270 (FRPLTNYSLKDA) the chain is on the extracellular side. Asn264 is a glycosylation site (N-linked (GlcNAc...) asparagine). Residues 271–290 (VITVMCTAVTPMLNPFIYSL) form a helical membrane-spanning segment. The Cytoplasmic segment spans residues 291-309 (RNRDMKAALQKLFNKRISS).

Belongs to the G-protein coupled receptor 1 family.

Its subcellular location is the cell membrane. Its function is as follows. Odorant receptor. This chain is Olfactory receptor 1A1 (OR1A1), found in Gorilla gorilla gorilla (Western lowland gorilla).